The chain runs to 506 residues: Pentatricopeptide repeat-containing protein At5g18475 (506 aa).

The disordered stretch occupies residues 28–48 (SEKKKKPSPPPESSISPVETN). PPR repeat units follow at residues 88–122 (NNATYSVLLDNLVRHKKFLAVDAILHQMKYETCRF), 123–158 (QESLFLNLMRHFSRSDLHDKVMEMFNLIQVIARVKP), 159–194 (SLNAISTCLNLLIDSGEVNLSRKLLLYAKHNLGLQP), 195–229 (NTCIFNILVKHHCKNGDINFAFLVVEEMKRSGISY), 231–266 (NSITYSTLMDCLFAHSRSKEAVELFEDMISKEGISP), 267–301 (DPVTFNVMINGFCRAGEVERAKKILDFMKKNGCNP), 302–336 (NVYNYSALMNGFCKVGKIQEAKQTFDEVKKTGLKL), 337–371 (DTVGYTTLMNCFCRNGETDEAMKLLGEMKASRCRA), 372–406 (DTLTYNVILRGLSSEGRSEEALQMLDQWGSEGVHL), 407–441 (NKGSYRIILNALCCNGELEKAVKFLSVMSERGIWP), 442–476 (HHATWNELVVRLCESGYTEIGVRVLIGFLRIGLIP), and 477–506 (GPKSWGAVVESICKERKLVHVFELLDSLVS).

Belongs to the PPR family. P subfamily.

The polypeptide is Pentatricopeptide repeat-containing protein At5g18475 (Arabidopsis thaliana (Mouse-ear cress)).